The sequence spans 454 residues: Glutamate mutase epsilon subunit (454 aa).

Residue arginine 67 coordinates L-glutamate. Glycine 69 lines the adenosylcob(III)alamin pocket. Arginine 99 contributes to the L-glutamate binding site. Residue asparagine 122 coordinates adenosylcob(III)alamin. Residues 148–149, glutamate 170, and tyrosine 176 each bind L-glutamate; that span reads RH. Adenosylcob(III)alamin is bound at residue proline 179. Position 180 (tyrosine 180) interacts with L-glutamate. Adenosylcob(III)alamin contacts are provided by phenylalanine 296, lysine 325, glutamate 329, and isoleucine 333.

It belongs to the methylaspartate mutase GlmE subunit family. Heterotetramer composed of 2 epsilon subunits (GlmE) and 2 sigma subunits (GlmS). GlmE exists as a homodimer and GlmS as a monomer. It depends on adenosylcob(III)alamin as a cofactor.

It catalyses the reaction (2S,3S)-3-methyl-L-aspartate = L-glutamate. It functions in the pathway amino-acid degradation; L-glutamate degradation via mesaconate pathway; acetate and pyruvate from L-glutamate: step 1/4. Catalyzes the carbon skeleton rearrangement of L-glutamate to L-threo-3-methylaspartate ((2S,3S)-3-methylaspartate). This is Glutamate mutase epsilon subunit from Shigella dysenteriae serotype 1 (strain Sd197).